The following is a 515-amino-acid chain: 2-isopropylmalate synthase (515 aa).

Residues 5–267 (VIIFDTTLRD…RTGINHEEIH (263 aa)) enclose the Pyruvate carboxyltransferase domain. Mn(2+) is bound by residues Asp14, His202, His204, and Asn238. The interval 392-515 (KLNYLSVQSG…EMKQKKIATV (124 aa)) is regulatory domain.

The protein belongs to the alpha-IPM synthase/homocitrate synthase family. LeuA type 1 subfamily. Homodimer. Mn(2+) is required as a cofactor.

Its subcellular location is the cytoplasm. The catalysed reaction is 3-methyl-2-oxobutanoate + acetyl-CoA + H2O = (2S)-2-isopropylmalate + CoA + H(+). Its pathway is amino-acid biosynthesis; L-leucine biosynthesis; L-leucine from 3-methyl-2-oxobutanoate: step 1/4. In terms of biological role, catalyzes the condensation of the acetyl group of acetyl-CoA with 3-methyl-2-oxobutanoate (2-ketoisovalerate) to form 3-carboxy-3-hydroxy-4-methylpentanoate (2-isopropylmalate). The polypeptide is 2-isopropylmalate synthase (Vibrio vulnificus (strain CMCP6)).